An 81-amino-acid polypeptide reads, in one-letter code: Sec-independent protein translocase protein TatA (81 aa).

The helical transmembrane segment at 1–21 threads the bilayer; the sequence is MGMPSGQELLIILAIVVLLFG. Positions 45-81 are disordered; that stretch reads NEDDDTEVKSASTEAPKKVESAEEVASKESSKTPTQA. Residues 59–75 are compositionally biased toward basic and acidic residues; it reads APKKVESAEEVASKESS.

The protein belongs to the TatA/E family. In terms of assembly, the Tat system comprises two distinct complexes: a TatABC complex, containing multiple copies of TatA, TatB and TatC subunits, and a separate TatA complex, containing only TatA subunits. Substrates initially bind to the TatABC complex, which probably triggers association of the separate TatA complex to form the active translocon.

It is found in the cell inner membrane. In terms of biological role, part of the twin-arginine translocation (Tat) system that transports large folded proteins containing a characteristic twin-arginine motif in their signal peptide across membranes. TatA could form the protein-conducting channel of the Tat system. This is Sec-independent protein translocase protein TatA from Sulfurimonas denitrificans (strain ATCC 33889 / DSM 1251) (Thiomicrospira denitrificans (strain ATCC 33889 / DSM 1251)).